Here is a 149-residue protein sequence, read N- to C-terminus: Hydroalkoxylation enzyme phnH (149 aa).

The N-terminal stretch at 1–18 (MKFTYLVSLAAFAVTALG) is a signal peptide. Asparagine 33 and asparagine 127 each carry an N-linked (GlcNAc...) asparagine glycan.

In terms of assembly, homotetramer.

The enzyme catalyses 2,4,7,9-tetrahydroxy-6-methyl-8-(2-methylbut-3-en-2-yl)-1-oxo-1H-phenalen-3-ol = (2'R)-atrovenetin. It functions in the pathway secondary metabolite biosynthesis. Its function is as follows. Hydroalkoxylation enzyme; part of the gene cluster that mediates the biosynthesis of phenalenones such as herqueinone, compounds that have been reported to treat tumors, bacterial infections and/or mycoses, and rheumatic diseases. The non-reducing polyketide synthase phnA synthesizes the heptaketide backbone and cyclizes it into the angular, hemiketal-containing naphtho-gamma-pyrone prephenalenone. The product template (PT) domain of phnA catalyzes only the C4-C9 aldol condensation, which is unprecedented among known PT domains. The transformation of prephenalenone to phenalenones requires an FAD-dependent monooxygenase phnB, which catalyzes the C2 aromatic hydroxylation of prephenalenone and ring opening of the gamma-pyrone ring simultaneously. Subsequent intramolecular deprotonation of C3 phenolic oxygen accelerates phenalenone ring closure to yield the tricyclic phenalenone core with a C2 hydroxylation. The prenyltransferase phnF further catalyzes reverse C-prenylation of phenalenone by direct electrophilic substitution at C6, or possibly via first a forward O-prenylation of a neighboring phenol in phenalenone, followed by a Claisen rearrangement. The hydroalkoxylation enzyme phnH catalyzes the 5-exo-trig cyclization via acid catalysis after the spontaneous deprotonation of 7-OH, which leads to the formation of the dihydrobenzofuran atrovenetin. Atrovenetin is further converted to deoxyherqueinone by the O-methyltransferase phnC which can methylate C2-OH to stabilize the northern portion of the phenalenone core. Finally, the oxidoreductase phnG converts deoxyherqueinone to herqueinone via C6 hydroxylation. This Penicillium herquei protein is Hydroalkoxylation enzyme phnH.